Here is a 348-residue protein sequence, read N- to C-terminus: tRNA N6-adenosine threonylcarbamoyltransferase (348 aa).

Fe cation is bound by residues H119 and H123. Residues 141-145 (LVSGG), D174, G187, D191, and N280 each bind substrate. Position 310 (D310) interacts with Fe cation.

Belongs to the KAE1 / TsaD family. It depends on Fe(2+) as a cofactor.

The protein localises to the cytoplasm. It carries out the reaction L-threonylcarbamoyladenylate + adenosine(37) in tRNA = N(6)-L-threonylcarbamoyladenosine(37) in tRNA + AMP + H(+). In terms of biological role, required for the formation of a threonylcarbamoyl group on adenosine at position 37 (t(6)A37) in tRNAs that read codons beginning with adenine. Is involved in the transfer of the threonylcarbamoyl moiety of threonylcarbamoyl-AMP (TC-AMP) to the N6 group of A37, together with TsaE and TsaB. TsaD likely plays a direct catalytic role in this reaction. This Enterococcus faecalis (strain ATCC 700802 / V583) protein is tRNA N6-adenosine threonylcarbamoyltransferase.